Here is a 120-residue protein sequence, read N- to C-terminus: NAD(P)H-quinone oxidoreductase subunit 3 (120 aa).

The next 3 membrane-spanning stretches (helical) occupy residues 10 to 30 (FLGF…TNLI), 64 to 84 (MFAL…PWAV), and 89 to 109 (LGLL…IALA).

The protein belongs to the complex I subunit 3 family. NDH-1 can be composed of about 15 different subunits; different subcomplexes with different compositions have been identified which probably have different functions.

Its subcellular location is the cellular thylakoid membrane. It carries out the reaction a plastoquinone + NADH + (n+1) H(+)(in) = a plastoquinol + NAD(+) + n H(+)(out). The catalysed reaction is a plastoquinone + NADPH + (n+1) H(+)(in) = a plastoquinol + NADP(+) + n H(+)(out). Its function is as follows. NDH-1 shuttles electrons from an unknown electron donor, via FMN and iron-sulfur (Fe-S) centers, to quinones in the respiratory and/or the photosynthetic chain. The immediate electron acceptor for the enzyme in this species is believed to be plastoquinone. Couples the redox reaction to proton translocation, and thus conserves the redox energy in a proton gradient. Cyanobacterial NDH-1 also plays a role in inorganic carbon-concentration. The protein is NAD(P)H-quinone oxidoreductase subunit 3 of Prochlorococcus marinus subsp. pastoris (strain CCMP1986 / NIES-2087 / MED4).